The chain runs to 277 residues: Putative hydroxypyruvate isomerase (277 aa).

Residues Glu150 and Glu249 each act as proton donor/acceptor in the active site.

Belongs to the hyi family.

The enzyme catalyses 3-hydroxypyruvate = 2-hydroxy-3-oxopropanoate. Functionally, catalyzes the reversible isomerization between hydroxypyruvate and 2-hydroxy-3-oxopropanoate (also termed tartronate semialdehyde). This chain is Putative hydroxypyruvate isomerase (Hyi), found in Mus musculus (Mouse).